The primary structure comprises 208 residues: MRKIRTKICGITTPEDAAAAAAAGADAVGLVFFQGSSRAVDIARAKKITAALPPFVSVVALFVNESAQNIRRILAEVPIHIIQFHGDEDDAFCRQFHRPYIKAIRVQTASDIRNAATRFPDAQALLFDAYHPSEYGGTGNRFDWTLLAEYSGKPWVLAGGLTPENVGEAVRITGAESVDVSGGVEASKGKKDAAKVAAFIATANRLSR.

It belongs to the TrpF family.

The enzyme catalyses N-(5-phospho-beta-D-ribosyl)anthranilate = 1-(2-carboxyphenylamino)-1-deoxy-D-ribulose 5-phosphate. The protein operates within amino-acid biosynthesis; L-tryptophan biosynthesis; L-tryptophan from chorismate: step 3/5. This chain is N-(5'-phosphoribosyl)anthranilate isomerase, found in Neisseria meningitidis serogroup B (strain ATCC BAA-335 / MC58).